The primary structure comprises 288 residues: Transmembrane protein 163 (288 aa).

Basic and acidic residues predominate over residues 1-11 (MERAPGSERRS). Residues 1 to 64 (MERAPGSERR…ESGQFSDGFE (64 aa)) form a disordered region. Topologically, residues 1 to 87 (MERAPGSERR…HEAQNYRKKA (87 aa)) are cytoplasmic. Serine 11 bears the Phosphoserine mark. Positions 12–24 (PPGPGVPRPPPRG) are enriched in pro residues. The span at 25 to 42 (HAPSTAAPAPNPAPLSSS) shows a compositional bias: low complexity. The segment at 41–71 (SSMQPDEERQPRISESGQFSDGFEDRGLLES) is required for interaction with MCOLN1. Phosphoserine occurs at positions 54, 56, and 60. The chain crosses the membrane as a helical span at residues 88–108 (LWVSWLSIIVTLALAVAAFTV). At 109-115 (SVMRYSA) the chain is on the extracellular side. A helical transmembrane segment spans residues 116-136 (SAFGFAFDAILDVLSSAIVLW). The Cytoplasmic portion of the chain corresponds to 137–149 (RYSNAAAVHSAHR). The helical transmembrane segment at 150-170 (EYIACVILGVIFLLSSICIVV) threads the bilayer. Over 171–186 (KAIHDLSTRLLPEVDD) the chain is Extracellular. A helical membrane pass occupies residues 187–207 (FLFSVSILSGILCSVLAVLKF). Over 208-216 (MLGKVLTSR) the chain is Cytoplasmic. A helical membrane pass occupies residues 217-237 (ALITDGFNSLVGGVMGFSILL). The Extracellular portion of the chain corresponds to 238–254 (SAEVFKHNAAVWYLDGS). A helical membrane pass occupies residues 255 to 275 (IGVLIGLTIFAYGVKLLIDMV). The Cytoplasmic portion of the chain corresponds to 276-288 (PRVRQTRHYEMFE).

Belongs to the TMEM163 family. Homodimer. Interacts with MCOLN1. Interacts with SLC30A1, SLC30A2, SLC30A3 and SLC30A4. As to expression, strongly expressed in brain. Also detected in lung, liver, kidney and spleen. Mainly expressed in the glutaminergic neuron subpopulations.

The protein resides in the cytoplasmic vesicle. It is found in the secretory vesicle. Its subcellular location is the synaptic vesicle membrane. The protein localises to the early endosome membrane. It localises to the late endosome membrane. The protein resides in the lysosome membrane. It is found in the cell membrane. It carries out the reaction Zn(2+)(in) = Zn(2+)(out). Its function is as follows. Zinc ion transporter that mediates zinc efflux and plays a crucial role in intracellular zinc homeostasis. Binds the divalent cations Zn(2+), Ni(2+), and to a minor extent Cu(2+). Is a functional modulator of P2X purinoceptors, including P2RX1, P2RX3, P2RX4 and P2RX7. Plays a role in central nervous system development and is required for myelination, and survival and proliferation of oligodendrocytes. The sequence is that of Transmembrane protein 163 (Tmem163) from Rattus norvegicus (Rat).